A 97-amino-acid polypeptide reads, in one-letter code: Co-chaperonin GroES (97 aa).

This sequence belongs to the GroES chaperonin family. As to quaternary structure, heptamer of 7 subunits arranged in a ring. Interacts with the chaperonin GroEL.

It is found in the cytoplasm. Together with the chaperonin GroEL, plays an essential role in assisting protein folding. The GroEL-GroES system forms a nano-cage that allows encapsulation of the non-native substrate proteins and provides a physical environment optimized to promote and accelerate protein folding. GroES binds to the apical surface of the GroEL ring, thereby capping the opening of the GroEL channel. This chain is Co-chaperonin GroES, found in Wigglesworthia glossinidia brevipalpis.